Here is a 123-residue protein sequence, read N- to C-terminus: Phosphoribosyl-AMP cyclohydrolase (123 aa).

Asp81 lines the Mg(2+) pocket. Residue Cys82 participates in Zn(2+) binding. 2 residues coordinate Mg(2+): Asp83 and Asp85. Positions 98 and 105 each coordinate Zn(2+).

This sequence belongs to the PRA-CH family. As to quaternary structure, homodimer. Mg(2+) is required as a cofactor. The cofactor is Zn(2+).

It localises to the cytoplasm. It carries out the reaction 1-(5-phospho-beta-D-ribosyl)-5'-AMP + H2O = 1-(5-phospho-beta-D-ribosyl)-5-[(5-phospho-beta-D-ribosylamino)methylideneamino]imidazole-4-carboxamide. It participates in amino-acid biosynthesis; L-histidine biosynthesis; L-histidine from 5-phospho-alpha-D-ribose 1-diphosphate: step 3/9. Functionally, catalyzes the hydrolysis of the adenine ring of phosphoribosyl-AMP. This chain is Phosphoribosyl-AMP cyclohydrolase, found in Nocardioides sp. (strain ATCC BAA-499 / JS614).